A 307-amino-acid chain; its full sequence is tRNA pseudouridine synthase B (307 aa).

Asp39 (nucleophile) is an active-site residue.

This sequence belongs to the pseudouridine synthase TruB family. Type 1 subfamily.

The catalysed reaction is uridine(55) in tRNA = pseudouridine(55) in tRNA. In terms of biological role, responsible for synthesis of pseudouridine from uracil-55 in the psi GC loop of transfer RNAs. This Lactiplantibacillus plantarum (strain ATCC BAA-793 / NCIMB 8826 / WCFS1) (Lactobacillus plantarum) protein is tRNA pseudouridine synthase B.